The sequence spans 415 residues: Transposase for insertion sequence element IS1081 (415 aa).

This sequence belongs to the transposase mutator family.

Required for the transposition of the insertion element. This Mycobacterium bovis (strain ATCC BAA-935 / AF2122/97) protein is Transposase for insertion sequence element IS1081.